The chain runs to 605 residues: DNA primase (605 aa).

The segment at cysteine 38–cysteine 62 adopts a CHC2-type zinc-finger fold. The 82-residue stretch at aspartate 260 to glycine 341 folds into the Toprim domain. Mg(2+) contacts are provided by glutamate 266, aspartate 310, and aspartate 312.

The protein belongs to the DnaG primase family. In terms of assembly, monomer. Interacts with DnaB. It depends on Zn(2+) as a cofactor. Mg(2+) serves as cofactor.

It catalyses the reaction ssDNA + n NTP = ssDNA/pppN(pN)n-1 hybrid + (n-1) diphosphate.. In terms of biological role, RNA polymerase that catalyzes the synthesis of short RNA molecules used as primers for DNA polymerase during DNA replication. This chain is DNA primase, found in Staphylococcus aureus (strain MW2).